Consider the following 164-residue polypeptide: Interleukin-36 beta (164 aa).

The propeptide occupies 1–4; it reads MNPQ.

It belongs to the IL-1 family. As to quaternary structure, interacts with cargo receptor TMED10; the interaction mediates the translocation from the cytoplasm into the ERGIC (endoplasmic reticulum-Golgi intermediate compartment) and thereby secretion. Post-translationally, N-terminal truncation leads to a dramatic enhancement of its activity (&gt;1000-fold). Expression at low levels in tonsil, bone marrow, heart, placenta, lung, testis and colon but not in any hematopoietic cell lines. Not detected in adipose tissue. Expressed at higher levels in psoriatic plaques than in symptomless psoriatic skin or healthy control skin. Increased levels are not detected in inflamed joint tissue.

It localises to the cytoplasm. The protein localises to the secreted. Cytokine that binds to and signals through the IL1RL2/IL-36R receptor which in turn activates NF-kappa-B and MAPK signaling pathways in target cells linked to a pro-inflammatory response. Part of the IL-36 signaling system that is thought to be present in epithelial barriers and to take part in local inflammatory response; similar to the IL-1 system with which it shares the coreceptor IL1RAP. Stimulates production of interleukin-6 and interleukin-8 in synovial fibrobasts, articular chondrocytes and mature adipocytes. Induces expression of a number of antimicrobial peptides including beta-defensins 4 and 103 as well as a number of matrix metalloproteases. Seems to be involved in skin inflammatory response by acting on keratinocytes, dendritic cells and indirectly on T-cells to drive tissue infiltration, cell maturation and cell proliferation. In cultured keratinocytes induces the expression of macrophage, T-cell, and neutrophil chemokines, such as CCL3, CCL4, CCL5, CCL2, CCL17, CCL22, CL20, CCL5, CCL2, CCL17, CCL22, CXCL8, CCL20 and CXCL1, and the production of pro-inflammatory cytokines such as TNF-alpha, IL-8 and IL-6. The protein is Interleukin-36 beta of Homo sapiens (Human).